The primary structure comprises 143 residues: Transmembrane protein 80 (143 aa).

The next 4 helical transmembrane spans lie at 21–41, 55–75, 99–119, and 121–141; these read MLFYLSGTYYALYFLATLLMI, LVLDLALLFLMGILEAVRLYL, ALLSAHFLLWQALVLWADWAL, and ATLLALHGLEAVLQVVAIAAF.

The protein localises to the membrane. It is found in the cell projection. Its subcellular location is the cilium. This Homo sapiens (Human) protein is Transmembrane protein 80.